Reading from the N-terminus, the 207-residue chain is Octanoyltransferase (207 aa).

The BPL/LPL catalytic domain occupies 27 to 203 (ASTEDELWVV…HLETQFTPKA (177 aa)). Substrate contacts are provided by residues 66 to 73 (RGGQITYH), 133 to 135 (SLG), and 146 to 148 (GLA). The active-site Acyl-thioester intermediate is the Cys-164.

Belongs to the LipB family.

It is found in the cytoplasm. The enzyme catalyses octanoyl-[ACP] + L-lysyl-[protein] = N(6)-octanoyl-L-lysyl-[protein] + holo-[ACP] + H(+). Its pathway is protein modification; protein lipoylation via endogenous pathway; protein N(6)-(lipoyl)lysine from octanoyl-[acyl-carrier-protein]: step 1/2. Catalyzes the transfer of endogenously produced octanoic acid from octanoyl-acyl-carrier-protein onto the lipoyl domains of lipoate-dependent enzymes. Lipoyl-ACP can also act as a substrate although octanoyl-ACP is likely to be the physiological substrate. This is Octanoyltransferase from Neisseria meningitidis serogroup C / serotype 2a (strain ATCC 700532 / DSM 15464 / FAM18).